The following is a 155-amino-acid chain: Ribonuclease H (155 aa).

Residues 4-145 (ETKVIEIYTD…ADALARKAIT (142 aa)) enclose the RNase H type-1 domain. Positions 13, 51, 73, and 137 each coordinate Mg(2+).

Belongs to the RNase H family. Monomer. It depends on Mg(2+) as a cofactor.

The protein resides in the cytoplasm. The enzyme catalyses Endonucleolytic cleavage to 5'-phosphomonoester.. Endonuclease that specifically degrades the RNA of RNA-DNA hybrids. This Bartonella bacilliformis (strain ATCC 35685 / KC583 / Herrer 020/F12,63) protein is Ribonuclease H.